A 497-amino-acid polypeptide reads, in one-letter code: Galactose-1-phosphate uridylyltransferase (497 aa).

The protein belongs to the galactose-1-phosphate uridylyltransferase type 2 family.

The protein localises to the cytoplasm. The enzyme catalyses alpha-D-galactose 1-phosphate + UDP-alpha-D-glucose = alpha-D-glucose 1-phosphate + UDP-alpha-D-galactose. It functions in the pathway carbohydrate metabolism; galactose metabolism. The chain is Galactose-1-phosphate uridylyltransferase from Clostridium acetobutylicum (strain ATCC 824 / DSM 792 / JCM 1419 / IAM 19013 / LMG 5710 / NBRC 13948 / NRRL B-527 / VKM B-1787 / 2291 / W).